Reading from the N-terminus, the 414-residue chain is Peptidoglycan beta-N-acetylmuramidase NamZ (414 aa).

The first 23 residues, 1–23 (MRKTIFAFLTGLMMFGTITAASA), serve as a signal peptide directing secretion.

It belongs to the glycoside hydrolase 171 family. In terms of assembly, homodimer in solution.

The protein localises to the secreted. The enzyme catalyses Hydrolysis of terminal, non-reducing N-acetylmuramic residues.. Its function is as follows. Catalyzes the exo-lytic cleavage of beta-1,4-N-acetylmuramate (beta-1,4-MurNAc) from the non-reducing ends of peptidoglycan chains. Specifically hydrolyzes the natural, peptidoglycan-derived disaccharide MurNAc-GlcNAc and the artificial substrate para-nitrophenyl beta-N-acetylmuramic acid (pNP-MurNAc). Requires a MurNAc entity at the non-reducing end, and cannot cleave GlcNAc-MurNAc. Probably plays a role in cell wall turnover and recycling. This chain is Peptidoglycan beta-N-acetylmuramidase NamZ, found in Bacillus subtilis (strain 168).